The chain runs to 454 residues: Gastrin/cholecystokinin type B receptor (454 aa).

Topologically, residues 1–57 (MELLKPNRSVLGSGPGPGASLCRSGGPLLNGSGTGNLSCEPPRIRGAGTRELELAIR) are extracellular. N-linked (GlcNAc...) asparagine glycans are attached at residues Asn7, Asn30, and Asn36. A helical membrane pass occupies residues 58 to 79 (VTLYAVIFLMSVGGNVLIIVVL). Residues 80 to 87 (GLSRRLRT) are Cytoplasmic-facing. The helical transmembrane segment at 88-109 (VTNAFLLSLAVSDLLLAVACMP) threads the bilayer. The Extracellular portion of the chain corresponds to 110–131 (FTLLPNLMGTFIFGTVVCKAVS). Cys127 and Cys205 are oxidised to a cystine. Residues 132-150 (YFMGVSVSVSTLSLVAIAL) traverse the membrane as a helical segment. At 151-170 (ERYSAICRPLQARVWQTRSH) the chain is on the cytoplasmic side. A helical transmembrane segment spans residues 171–189 (AARVIVATWMLSGLLMVPY). The Extracellular segment spans residues 190-219 (PVYTAVQPAGPRVLQCMHRWPSARVRQTWS). Residues 220–242 (VLLLLLLFFVPGVVMAVAYGLIS) traverse the membrane as a helical segment. The Cytoplasmic segment spans residues 243 to 340 (RELYLGLRFD…KLLAKKRVVR (98 aa)). Residues 257–284 (SESQSRVGSQGGLPGGTGQGPAQANGRC) form a disordered region. Residues 265–275 (SQGGLPGGTGQ) show a composition bias toward gly residues. Residues 341 to 362 (MLLVIVVLFFLCWLPVYSANTW) traverse the membrane as a helical segment. Residues 363–380 (RAFDGPGAHRALSGAPIS) are Extracellular-facing. The helical transmembrane segment at 381–401 (FIHLLTYASACVNPLVYCFMH) threads the bilayer. Over 402-454 (RRFRQACLDTCTRCCPRPPRARPRPLPDEDPPTPSIASLSRLSYTTISTLGPG) the chain is Cytoplasmic. Residue Cys415 is the site of S-palmitoyl cysteine attachment. Positions 422–441 (ARPRPLPDEDPPTPSIASLS) are disordered.

It belongs to the G-protein coupled receptor 1 family.

It is found in the cell membrane. Functionally, receptor for gastrin and cholecystokinin. The CCK-B receptors occur throughout the central nervous system where they modulate anxiety, analgesia, arousal, and neuroleptic activity. This receptor mediates its action by association with G proteins that activate a phosphatidylinositol-calcium second messenger system. This chain is Gastrin/cholecystokinin type B receptor (CCKBR), found in Bos taurus (Bovine).